Here is a 565-residue protein sequence, read N- to C-terminus: CTP synthase (565 aa).

The tract at residues Met1–Leu272 is amidoligase domain. Residue Ser18 coordinates CTP. Residue Ser18 participates in UTP binding. Ser19–Ile24 lines the ATP pocket. Tyr59 provides a ligand contact to L-glutamine. Residue Asp76 coordinates ATP. The Mg(2+) site is built by Asp76 and Glu146. Residues Asp153–Glu155, Lys193–Gln198, and Lys229 contribute to the CTP site. UTP contacts are provided by residues Lys193–Gln198 and Lys229. In terms of domain architecture, Glutamine amidotransferase type-1 spans Thr299 to Gly543. Gly363 serves as a coordination point for L-glutamine. Cys390 functions as the Nucleophile; for glutamine hydrolysis in the catalytic mechanism. Residues Leu391–Gln394, Glu414, and Arg471 each bind L-glutamine. Active-site residues include His516 and Glu518.

Belongs to the CTP synthase family. Homotetramer.

The catalysed reaction is UTP + L-glutamine + ATP + H2O = CTP + L-glutamate + ADP + phosphate + 2 H(+). It carries out the reaction L-glutamine + H2O = L-glutamate + NH4(+). It catalyses the reaction UTP + NH4(+) + ATP = CTP + ADP + phosphate + 2 H(+). Its pathway is pyrimidine metabolism; CTP biosynthesis via de novo pathway; CTP from UDP: step 2/2. With respect to regulation, allosterically activated by GTP, when glutamine is the substrate; GTP has no effect on the reaction when ammonia is the substrate. The allosteric effector GTP functions by stabilizing the protein conformation that binds the tetrahedral intermediate(s) formed during glutamine hydrolysis. Inhibited by the product CTP, via allosteric rather than competitive inhibition. Its function is as follows. Catalyzes the ATP-dependent amination of UTP to CTP with either L-glutamine or ammonia as the source of nitrogen. Regulates intracellular CTP levels through interactions with the four ribonucleotide triphosphates. The polypeptide is CTP synthase (Chlorobaculum tepidum (strain ATCC 49652 / DSM 12025 / NBRC 103806 / TLS) (Chlorobium tepidum)).